The following is a 311-amino-acid chain: Probable cysteine synthase (311 aa).

At Lys45 the chain carries N6-(pyridoxal phosphate)lysine. Residues Asn75, 182–186, and Ser270 each bind pyridoxal 5'-phosphate; that span reads GTGGT.

It belongs to the cysteine synthase/cystathionine beta-synthase family. Pyridoxal 5'-phosphate is required as a cofactor.

The enzyme catalyses O-acetyl-L-serine + hydrogen sulfide = L-cysteine + acetate. It participates in amino-acid biosynthesis; L-cysteine biosynthesis; L-cysteine from L-serine: step 2/2. This is Probable cysteine synthase (ytkP) from Bacillus subtilis (strain 168).